Here is a 181-residue protein sequence, read N- to C-terminus: Large ribosomal subunit protein bL17 (181 aa).

Positions 129-181 are disordered; it reads AEKSEKSAKTAKAAKAPAKKATAKKASTKAVAAKKKAVKKAQKKDRAASAARA. Residues 145 to 171 show a composition bias toward basic residues; it reads PAKKATAKKASTKAVAAKKKAVKKAQK.

This sequence belongs to the bacterial ribosomal protein bL17 family. As to quaternary structure, part of the 50S ribosomal subunit. Contacts protein L32.

This Bdellovibrio bacteriovorus (strain ATCC 15356 / DSM 50701 / NCIMB 9529 / HD100) protein is Large ribosomal subunit protein bL17.